The following is a 428-amino-acid chain: 3-phosphoshikimate 1-carboxyvinyltransferase (428 aa).

3 residues coordinate 3-phosphoshikimate: lysine 23, serine 24, and arginine 28. Lysine 23 serves as a coordination point for phosphoenolpyruvate. Residues glycine 97 and arginine 125 each coordinate phosphoenolpyruvate. Residues serine 170, serine 171, glutamine 172, serine 198, aspartate 314, asparagine 337, and lysine 341 each coordinate 3-phosphoshikimate. Residue glutamine 172 participates in phosphoenolpyruvate binding. Residue aspartate 314 is the Proton acceptor of the active site. Phosphoenolpyruvate-binding residues include arginine 345, arginine 387, and lysine 412.

It belongs to the EPSP synthase family. Monomer.

Its subcellular location is the cytoplasm. It catalyses the reaction 3-phosphoshikimate + phosphoenolpyruvate = 5-O-(1-carboxyvinyl)-3-phosphoshikimate + phosphate. It functions in the pathway metabolic intermediate biosynthesis; chorismate biosynthesis; chorismate from D-erythrose 4-phosphate and phosphoenolpyruvate: step 6/7. Its function is as follows. Catalyzes the transfer of the enolpyruvyl moiety of phosphoenolpyruvate (PEP) to the 5-hydroxyl of shikimate-3-phosphate (S3P) to produce enolpyruvyl shikimate-3-phosphate and inorganic phosphate. This Erwinia tasmaniensis (strain DSM 17950 / CFBP 7177 / CIP 109463 / NCPPB 4357 / Et1/99) protein is 3-phosphoshikimate 1-carboxyvinyltransferase.